Reading from the N-terminus, the 288-residue chain is Acetyl-coenzyme A carboxylase carboxyl transferase subunit beta (288 aa).

The CoA carboxyltransferase N-terminal domain maps to 34–288 (LFAKCPACKH…HLVAFHGGVS (255 aa)). Zn(2+) contacts are provided by C38, C41, C56, and C59. A C4-type zinc finger spans residues 38–59 (CPACKHMIYQKDLGPAKICPTC).

Belongs to the AccD/PCCB family. In terms of assembly, acetyl-CoA carboxylase is a heterohexamer composed of biotin carboxyl carrier protein (AccB), biotin carboxylase (AccC) and two subunits each of ACCase subunit alpha (AccA) and ACCase subunit beta (AccD). It depends on Zn(2+) as a cofactor.

It is found in the cytoplasm. The enzyme catalyses N(6)-carboxybiotinyl-L-lysyl-[protein] + acetyl-CoA = N(6)-biotinyl-L-lysyl-[protein] + malonyl-CoA. It functions in the pathway lipid metabolism; malonyl-CoA biosynthesis; malonyl-CoA from acetyl-CoA: step 1/1. Component of the acetyl coenzyme A carboxylase (ACC) complex. Biotin carboxylase (BC) catalyzes the carboxylation of biotin on its carrier protein (BCCP) and then the CO(2) group is transferred by the transcarboxylase to acetyl-CoA to form malonyl-CoA. In Streptococcus equi subsp. equi (strain 4047), this protein is Acetyl-coenzyme A carboxylase carboxyl transferase subunit beta.